The sequence spans 338 residues: DNA-directed RNA polymerase subunit alpha (338 aa).

The interval 1–234 (MIQKNWQELI…DQLNVFVNFE (234 aa)) is alpha N-terminal domain (alpha-NTD). The segment at 250–338 (FNPALLKKVD…ELAKRFEEHY (89 aa)) is alpha C-terminal domain (alpha-CTD).

This sequence belongs to the RNA polymerase alpha chain family. As to quaternary structure, homodimer. The RNAP catalytic core consists of 2 alpha, 1 beta, 1 beta' and 1 omega subunit. When a sigma factor is associated with the core the holoenzyme is formed, which can initiate transcription.

It carries out the reaction RNA(n) + a ribonucleoside 5'-triphosphate = RNA(n+1) + diphosphate. Its function is as follows. DNA-dependent RNA polymerase catalyzes the transcription of DNA into RNA using the four ribonucleoside triphosphates as substrates. The polypeptide is DNA-directed RNA polymerase subunit alpha (Beijerinckia indica subsp. indica (strain ATCC 9039 / DSM 1715 / NCIMB 8712)).